We begin with the raw amino-acid sequence, 718 residues long: Phenylalanine--tRNA ligase beta subunit (718 aa).

A tRNA-binding domain is found at 40–153 (FLNVSKIKFG…KADLKQDPID (114 aa)). The 76-residue stretch at 387–462 (DKKESFNFVW…RFYGYENLVF (76 aa)) folds into the B5 domain. Asp-440, Asp-446, Glu-449, and Glu-450 together coordinate Mg(2+).

The protein belongs to the phenylalanyl-tRNA synthetase beta subunit family. Type 1 subfamily. In terms of assembly, tetramer of two alpha and two beta subunits. Mg(2+) serves as cofactor.

The protein localises to the cytoplasm. It catalyses the reaction tRNA(Phe) + L-phenylalanine + ATP = L-phenylalanyl-tRNA(Phe) + AMP + diphosphate + H(+). In Mycoplasmopsis pulmonis (strain UAB CTIP) (Mycoplasma pulmonis), this protein is Phenylalanine--tRNA ligase beta subunit.